Consider the following 185-residue polypeptide: Ribosome-recycling factor (185 aa).

Belongs to the RRF family.

The protein resides in the cytoplasm. Its function is as follows. Responsible for the release of ribosomes from messenger RNA at the termination of protein biosynthesis. May increase the efficiency of translation by recycling ribosomes from one round of translation to another. The protein is Ribosome-recycling factor of Shewanella denitrificans (strain OS217 / ATCC BAA-1090 / DSM 15013).